We begin with the raw amino-acid sequence, 98 residues long: Small ribosomal subunit protein uS19 (98 aa).

Disordered regions lie at residues 1–30 and 78–98; these read MARS…KKSV and RTFH…PAKK. The segment covering 9-24 has biased composition (basic and acidic residues); the sequence is PFADKHLTKKVEDANK.

It belongs to the universal ribosomal protein uS19 family.

Functionally, protein S19 forms a complex with S13 that binds strongly to the 16S ribosomal RNA. The sequence is that of Small ribosomal subunit protein uS19 from Anaeromyxobacter dehalogenans (strain 2CP-C).